The chain runs to 157 residues: MSEMSVVEYEVVSKNLTSKMSHELLFSVKKRWFVKPFRHDRQLGKLHYKLLPGNYIKFGLYVLKNQDYARFEIAWVHVDKDGKIEERTVYSIETYWHIFIDIENDLNCPYVLAKFIEMRPEFHKTAWVEESNYSIAEDDIQMVESIKRYLERKIASD.

This is an uncharacterized protein from Acidianus hospitalis (AFV-1).